The following is a 131-amino-acid chain: Small ribosomal subunit protein uS8 (131 aa).

This sequence belongs to the universal ribosomal protein uS8 family. In terms of assembly, part of the 30S ribosomal subunit. Contacts proteins S5 and S12.

In terms of biological role, one of the primary rRNA binding proteins, it binds directly to 16S rRNA central domain where it helps coordinate assembly of the platform of the 30S subunit. This is Small ribosomal subunit protein uS8 from Chlorobium phaeovibrioides (strain DSM 265 / 1930) (Prosthecochloris vibrioformis (strain DSM 265)).